Reading from the N-terminus, the 269-residue chain is Serine/threonine-protein kinase ZRK7 (269 aa).

Residues 80–269 (FDWSYAIGVD…KNRLMVTVIT (190 aa)) form the Protein kinase domain. ATP contacts are provided by residues 86-94 (IGVDRFVWY) and K106. D205 acts as the Proton acceptor in catalysis.

Belongs to the protein kinase superfamily. Ser/Thr protein kinase family. ZRK subfamily.

The catalysed reaction is L-seryl-[protein] + ATP = O-phospho-L-seryl-[protein] + ADP + H(+). It catalyses the reaction L-threonyl-[protein] + ATP = O-phospho-L-threonyl-[protein] + ADP + H(+). This is Serine/threonine-protein kinase ZRK7 from Arabidopsis thaliana (Mouse-ear cress).